Consider the following 157-residue polypeptide: UPF0262 protein Avi_0642 (157 aa).

It belongs to the UPF0262 family.

In Allorhizobium ampelinum (strain ATCC BAA-846 / DSM 112012 / S4) (Agrobacterium vitis (strain S4)), this protein is UPF0262 protein Avi_0642.